Reading from the N-terminus, the 87-residue chain is Sec-independent protein translocase protein TatA (87 aa).

Residues 1–21 form a helical membrane-spanning segment; the sequence is MGGISIWQLLIIALIIVLLFG. The segment at 54-87 is disordered; sequence NTEADADFEQKTLSKEEQQSEDPVQKSQKDKEQV.

Belongs to the TatA/E family. As to quaternary structure, the Tat system comprises two distinct complexes: a TatABC complex, containing multiple copies of TatA, TatB and TatC subunits, and a separate TatA complex, containing only TatA subunits. Substrates initially bind to the TatABC complex, which probably triggers association of the separate TatA complex to form the active translocon.

It is found in the cell inner membrane. Functionally, part of the twin-arginine translocation (Tat) system that transports large folded proteins containing a characteristic twin-arginine motif in their signal peptide across membranes. TatA could form the protein-conducting channel of the Tat system. This is Sec-independent protein translocase protein TatA from Photobacterium profundum (strain SS9).